The following is a 592-amino-acid chain: Aspartate--tRNA(Asp/Asn) ligase (592 aa).

Glutamate 175 is an L-aspartate binding site. Residues 199-202 form an aspartate region; the sequence is QLFK. Arginine 221 provides a ligand contact to L-aspartate. Residues 221–223 and glutamine 230 each bind ATP; that span reads RDE. Histidine 450 contributes to the L-aspartate binding site. Glutamate 483 serves as a coordination point for ATP. Arginine 490 contacts L-aspartate. 535-538 contacts ATP; sequence GLDR.

It belongs to the class-II aminoacyl-tRNA synthetase family. Type 1 subfamily. Homodimer.

The protein resides in the cytoplasm. The catalysed reaction is tRNA(Asx) + L-aspartate + ATP = L-aspartyl-tRNA(Asx) + AMP + diphosphate. Functionally, aspartyl-tRNA synthetase with relaxed tRNA specificity since it is able to aspartylate not only its cognate tRNA(Asp) but also tRNA(Asn). Reaction proceeds in two steps: L-aspartate is first activated by ATP to form Asp-AMP and then transferred to the acceptor end of tRNA(Asp/Asn). In Acinetobacter baylyi (strain ATCC 33305 / BD413 / ADP1), this protein is Aspartate--tRNA(Asp/Asn) ligase.